Here is a 472-residue protein sequence, read N- to C-terminus: Adenosylhomocysteinase (472 aa).

Substrate contacts are provided by Thr61, Asp136, and Glu196. An NAD(+)-binding site is contributed by 197 to 199; sequence TTT. Residues Lys226 and Asp230 each contribute to the substrate site. Residues Asn231, 260-265, Glu283, Asn318, 339-341, and Asn384 contribute to the NAD(+) site; these read GYGDVG and IGH.

The protein belongs to the adenosylhomocysteinase family. It depends on NAD(+) as a cofactor.

The protein localises to the cytoplasm. The enzyme catalyses S-adenosyl-L-homocysteine + H2O = L-homocysteine + adenosine. It functions in the pathway amino-acid biosynthesis; L-homocysteine biosynthesis; L-homocysteine from S-adenosyl-L-homocysteine: step 1/1. In terms of biological role, may play a key role in the regulation of the intracellular concentration of adenosylhomocysteine. The protein is Adenosylhomocysteinase of Cupriavidus necator (strain ATCC 17699 / DSM 428 / KCTC 22496 / NCIMB 10442 / H16 / Stanier 337) (Ralstonia eutropha).